Here is a 213-residue protein sequence, read N- to C-terminus: Nicotinate-nucleotide adenylyltransferase (213 aa).

This sequence belongs to the NadD family.

The enzyme catalyses nicotinate beta-D-ribonucleotide + ATP + H(+) = deamido-NAD(+) + diphosphate. Its pathway is cofactor biosynthesis; NAD(+) biosynthesis; deamido-NAD(+) from nicotinate D-ribonucleotide: step 1/1. Catalyzes the reversible adenylation of nicotinate mononucleotide (NaMN) to nicotinic acid adenine dinucleotide (NaAD). The chain is Nicotinate-nucleotide adenylyltransferase from Salmonella typhimurium (strain LT2 / SGSC1412 / ATCC 700720).